The primary structure comprises 149 residues: Arginine repressor (149 aa).

The protein belongs to the ArgR family.

It is found in the cytoplasm. The protein operates within amino-acid biosynthesis; L-arginine biosynthesis [regulation]. Its function is as follows. Regulates arginine biosynthesis genes. The protein is Arginine repressor of Alkaliphilus oremlandii (strain OhILAs) (Clostridium oremlandii (strain OhILAs)).